The following is a 735-amino-acid chain: MEDAGGGEETPAPEAPHPPQLAPPEEQGLLFQEETIDLGGDEFGSEENETASEGSSPLADKLNEHMMESVLISDSPNSEGDAGDLGRVRDEAEPGGEGDPGPEPAGTPSPSGEADGDCAPEDAAPSSGGAPRQDAAREVPGSEAARPEQEPPVAEPVPVCTIFSQRAPPASGDGFEPQMVKSPSFGGASEASARTPPQVVQPSPSLSTFFGDTAASHSLASDFFDSFTTSAFISVSNPGAGSPAPASPPPLAVPGTEGRPEPVAMRGPQAAAPPASPEPFAHIQAVFAGSDDPFATALSMSEMDRRNDAWLPGEATRGVLRAVATQQRGAVFVDKENLTMPGLRFDNIQGDAVKDLMLRFLGEKAAAKRQVLNADSVEQSFVGLKQLISCRNWRAAVDLCGRLLTAHGQGYGKSGLLTSHTTDSLQLWFVRLALLVKLGLFQNAEMEFEPFGNLDQPDLYYEYYPHVYPGRRGSMVPFSMRILHAELQQYLGNPQESLDRLHKVKTVCSKILANLEQGLAEDGGMSSVTQEGRQASIRLWRSRLGRVMYSMANCLLLMKDYVLAVEAYHSVIKYYPEQEPQLLSGIGRISLQIGDIKTAEKYFQDVEKVTQKLDGLQGKIMVLMNSAFLHLGQNNFAEAHRFFTEILRMDPRNAVANNNAAVCLLYLGKLKDSLRQLEAMVQQDPRHYLHESVLFNLTTMYELESSRSMQKKQALLEAVAGKEGDSFNTQCLKLA.

Disordered regions lie at residues 1 to 204 (MEDA…QPSP) and 237 to 276 (NPGA…PPAS). Positions 13-22 (PEAPHPPQLA) are enriched in pro residues. Acidic residues predominate over residues 34–50 (ETIDLGGDEFGSEENET). Ser-109 and Ser-184 each carry phosphoserine. TPR repeat units follow at residues 545–578 (GRVM…YPEQ), 580–613 (PQLL…TQKL), 620–653 (IMVL…DPRN), and 654–687 (AVAN…DPRH).

In terms of assembly, component of the multisubunit TRAPP (transport protein particle) complex, which includes at least TRAPPC2, TRAPPC2L, TRAPPC3, TRAPPC3L, TRAPPC4, TRAPPC5, TRAPPC8, TRAPPC9, TRAPPC10, TRAPPC11 and TRAPPC12. Interacts with CENPE. Phosphorylated as the cells enter mitosis but is dephosphorylated at or before the onset of anaphase. The phosphorylated form recruits CENPE to kinetochores more efficiently than the non-phosphorylated form.

The protein resides in the endoplasmic reticulum-Golgi intermediate compartment. It localises to the nucleus. Component of the TRAPP complex, which is involved in endoplasmic reticulum to Golgi apparatus trafficking at a very early stage. Also plays a role in chromosome congression, kinetochore assembly and stability and controls the recruitment of CENPE to the kinetochores. This is Trafficking protein particle complex subunit 12 from Homo sapiens (Human).